We begin with the raw amino-acid sequence, 189 residues long: UPF0301 protein CAB604 (189 aa).

Belongs to the UPF0301 (AlgH) family.

The chain is UPF0301 protein CAB604 from Chlamydia abortus (strain DSM 27085 / S26/3) (Chlamydophila abortus).